The chain runs to 196 residues: Lipoprotein signal peptidase (196 aa).

3 helical membrane-spanning segments follow: residues Leu43–Phe63, Ala75–Ser95, and Thr97–Asp117. Residues Asp126 and Asp144 contribute to the active site. Residues Tyr135–Ile155 traverse the membrane as a helical segment.

The protein belongs to the peptidase A8 family.

Its subcellular location is the cell inner membrane. The enzyme catalyses Release of signal peptides from bacterial membrane prolipoproteins. Hydrolyzes -Xaa-Yaa-Zaa-|-(S,diacylglyceryl)Cys-, in which Xaa is hydrophobic (preferably Leu), and Yaa (Ala or Ser) and Zaa (Gly or Ala) have small, neutral side chains.. Its pathway is protein modification; lipoprotein biosynthesis (signal peptide cleavage). Functionally, this protein specifically catalyzes the removal of signal peptides from prolipoproteins. This chain is Lipoprotein signal peptidase, found in Rickettsia typhi (strain ATCC VR-144 / Wilmington).